The following is a 153-amino-acid chain: E3 ubiquitin-protein ligase AIRP1 (153 aa).

The segment at 104–145 (CPICLEEYEIDNPKLLTKCGHDFHLACILAWMERSEACPVCD) adopts an RING-type; atypical zinc-finger fold.

Its subcellular location is the cytoplasm. It localises to the cytosol. It catalyses the reaction S-ubiquitinyl-[E2 ubiquitin-conjugating enzyme]-L-cysteine + [acceptor protein]-L-lysine = [E2 ubiquitin-conjugating enzyme]-L-cysteine + N(6)-ubiquitinyl-[acceptor protein]-L-lysine.. Functionally, possesses E3 ubiquitin-protein ligase activity in vitro when associated with the E2 enzyme UBC8 in vitro. Plays combinatory roles with AIRP2 in the positive regulation of the abscisic acid-mediated drought stress response. The polypeptide is E3 ubiquitin-protein ligase AIRP1 (Arabidopsis thaliana (Mouse-ear cress)).